A 393-amino-acid polypeptide reads, in one-letter code: NAD(P)H-quinone oxidoreductase subunit H, chloroplastic (393 aa).

This sequence belongs to the complex I 49 kDa subunit family. As to quaternary structure, NDH is composed of at least 16 different subunits, 5 of which are encoded in the nucleus.

It is found in the plastid. The protein resides in the chloroplast thylakoid membrane. The enzyme catalyses a plastoquinone + NADH + (n+1) H(+)(in) = a plastoquinol + NAD(+) + n H(+)(out). It carries out the reaction a plastoquinone + NADPH + (n+1) H(+)(in) = a plastoquinol + NADP(+) + n H(+)(out). Its function is as follows. NDH shuttles electrons from NAD(P)H:plastoquinone, via FMN and iron-sulfur (Fe-S) centers, to quinones in the photosynthetic chain and possibly in a chloroplast respiratory chain. The immediate electron acceptor for the enzyme in this species is believed to be plastoquinone. Couples the redox reaction to proton translocation, and thus conserves the redox energy in a proton gradient. The polypeptide is NAD(P)H-quinone oxidoreductase subunit H, chloroplastic (Brachypodium distachyon (Purple false brome)).